Consider the following 522-residue polypeptide: Lysine--tRNA ligase (522 aa).

A 'HIGH' region motif is present at residues 44–52; sequence PSGLPHIGT. The 'KMSKS' region signature appears at 290–294; it reads KISKS. ATP is bound at residue lysine 293.

The protein belongs to the class-I aminoacyl-tRNA synthetase family.

It localises to the cytoplasm. The catalysed reaction is tRNA(Lys) + L-lysine + ATP = L-lysyl-tRNA(Lys) + AMP + diphosphate. This Rickettsia africae (strain ESF-5) protein is Lysine--tRNA ligase.